The chain runs to 316 residues: Serpentine receptor class gamma-8 (316 aa).

Helical transmembrane passes span 28–48 (FVQV…LYVV), 60–80 (PFFM…IFIT), 106–126 (LYYP…IFLT), 147–167 (FSRI…NTII), 186–206 (IIPW…VVMI), 235–255 (ACAA…MKVL), and 267–287 (LVQP…MIFA).

It belongs to the nematode receptor-like protein srg family.

The protein resides in the membrane. The sequence is that of Serpentine receptor class gamma-8 (srg-8) from Caenorhabditis elegans.